Reading from the N-terminus, the 231-residue chain is uncharacterized protein (231 aa).

Residue 10–34 (VVTGAGSGIGEAIATLLHEEGAKVV) coordinates NADP(+). Serine 140 contributes to the substrate binding site. Tyrosine 153 (proton acceptor) is an active-site residue.

It belongs to the short-chain dehydrogenases/reductases (SDR) family.

This is an uncharacterized protein from Staphylococcus aureus (strain MW2).